A 284-amino-acid polypeptide reads, in one-letter code: Syntaxin-like protein psy1 (284 aa).

A coiled-coil region spans residues 23-57; the sequence is EEIDHIRDAIRQIEDNVGRIEMLHQQSLQEIDEAN. In terms of domain architecture, t-SNARE coiled-coil homology spans 181–243; that stretch reads LREVQERHAD…GEGTQHMDRA (63 aa). A helical; Anchor for type IV membrane protein membrane pass occupies residues 260–280; sequence ICVVIICVIVAVLCGVLIPVL.

Belongs to the syntaxin family.

The protein resides in the cell membrane. It localises to the prospore membrane. The polypeptide is Syntaxin-like protein psy1 (psy1) (Schizosaccharomyces pombe (strain 972 / ATCC 24843) (Fission yeast)).